The chain runs to 600 residues: DNA mismatch repair protein MutL (600 aa).

The protein belongs to the DNA mismatch repair MutL/HexB family.

In terms of biological role, this protein is involved in the repair of mismatches in DNA. It is required for dam-dependent methyl-directed DNA mismatch repair. May act as a 'molecular matchmaker', a protein that promotes the formation of a stable complex between two or more DNA-binding proteins in an ATP-dependent manner without itself being part of a final effector complex. This Sinorhizobium fredii (strain NBRC 101917 / NGR234) protein is DNA mismatch repair protein MutL.